Consider the following 183-residue polypeptide: Adenine phosphoribosyltransferase (183 aa).

This sequence belongs to the purine/pyrimidine phosphoribosyltransferase family. As to quaternary structure, homodimer.

It localises to the cytoplasm. The catalysed reaction is AMP + diphosphate = 5-phospho-alpha-D-ribose 1-diphosphate + adenine. The protein operates within purine metabolism; AMP biosynthesis via salvage pathway; AMP from adenine: step 1/1. Its function is as follows. Catalyzes a salvage reaction resulting in the formation of AMP, that is energically less costly than de novo synthesis. The chain is Adenine phosphoribosyltransferase from Sodalis glossinidius (strain morsitans).